The chain runs to 147 residues: Ribosome maturation factor RimP (147 aa).

It belongs to the RimP family.

It is found in the cytoplasm. Required for maturation of 30S ribosomal subunits. The protein is Ribosome maturation factor RimP of Thermosipho melanesiensis (strain DSM 12029 / CIP 104789 / BI429).